We begin with the raw amino-acid sequence, 553 residues long: T-complex protein 1 subunit eta (553 aa).

Glycine 41 serves as a coordination point for ADP. Glycine 41 lines the ATP pocket. Aspartate 92 serves as a coordination point for Mg(2+). Residues glycine 93, threonine 94, threonine 95, serine 96, serine 164, and serine 165 each coordinate ADP. Glycine 93 contributes to the ATP binding site. Serine 96 provides a ligand contact to ATP. Arginine 398 and glycine 409 together coordinate ATP. 3 residues coordinate ADP: glycine 409, glutamate 494, and arginine 499. Arginine 499 provides a ligand contact to ATP. The segment at 523 to 553 (PRSTVDAPPGGRGRGRGQTPQPLRPRSVALS) is disordered. Low complexity predominate over residues 539-553 (GQTPQPLRPRSVALS).

Component of the chaperonin-containing T-complex (TRiC), a hexadecamer composed of two identical back-to-back stacked rings enclosing a protein folding chamber. Each ring is made up of eight different subunits: TCP1/CCT1, CCT2, CCT3, CCT4, CCT5, CCT6A/CCT6, CCT7, CCT8.

It localises to the cytoplasm. It catalyses the reaction ATP + H2O = ADP + phosphate + H(+). Functionally, component of the chaperonin-containing T-complex (TRiC), a molecular chaperone complex that assists the folding of actin, tubulin and other proteins upon ATP hydrolysis. The polypeptide is T-complex protein 1 subunit eta (Gallus gallus (Chicken)).